The chain runs to 104 residues: Large ribosomal subunit protein bL21 (104 aa).

This sequence belongs to the bacterial ribosomal protein bL21 family. As to quaternary structure, part of the 50S ribosomal subunit. Contacts protein L20.

This protein binds to 23S rRNA in the presence of protein L20. This Endomicrobium trichonymphae protein is Large ribosomal subunit protein bL21.